Here is a 431-residue protein sequence, read N- to C-terminus: Isochorismate synthase MenF (431 aa).

Lys190 (proton acceptor) is an active-site residue. Glu240 functions as the Proton donor in the catalytic mechanism. Residues Glu284 and Glu416 each contribute to the Mg(2+) site.

The protein belongs to the isochorismate synthase family. As to quaternary structure, homodimer. It depends on Mg(2+) as a cofactor.

It carries out the reaction chorismate = isochorismate. Its pathway is quinol/quinone metabolism; 1,4-dihydroxy-2-naphthoate biosynthesis; 1,4-dihydroxy-2-naphthoate from chorismate: step 1/7. It participates in quinol/quinone metabolism; menaquinone biosynthesis. Functionally, catalyzes the conversion of chorismate to isochorismate. Can also catalyze the reverse reaction, but with a lower efficiency. This Escherichia coli (strain K12) protein is Isochorismate synthase MenF.